The chain runs to 295 residues: HTH-type transcriptional regulator TdfR (295 aa).

One can recognise an HTH lysR-type domain in the interval 1–58 (MEFRQLRYFVAAAEEGNVGAAARRLHISQPPVTRQIHALEQHLGVLLFERSARGVQLT). The segment at residues 18–37 (VGAAARRLHISQPPVTRQIH) is a DNA-binding region (H-T-H motif).

The protein belongs to the LysR transcriptional regulatory family.

The protein localises to the cytoplasm. Functionally, involved in the regulation of 3-chlorocatechol degradation. Transcriptional regulator of tfdB expression. Acts as a repressor in the absence of its effector (either 2-cis-chlorodiene lactone or chloromaleylacetate) but acts as an activator when its effector is present. The chain is HTH-type transcriptional regulator TdfR (tfdR) from Cupriavidus pinatubonensis (strain JMP 134 / LMG 1197) (Cupriavidus necator (strain JMP 134)).